Consider the following 491-residue polypeptide: Glutamyl-tRNA(Gln) amidotransferase subunit A (491 aa).

Residues lysine 76 and serine 154 each act as charge relay system in the active site. The active-site Acyl-ester intermediate is serine 178.

This sequence belongs to the amidase family. GatA subfamily. As to quaternary structure, heterotrimer of A, B and C subunits.

It catalyses the reaction L-glutamyl-tRNA(Gln) + L-glutamine + ATP + H2O = L-glutaminyl-tRNA(Gln) + L-glutamate + ADP + phosphate + H(+). Its function is as follows. Allows the formation of correctly charged Gln-tRNA(Gln) through the transamidation of misacylated Glu-tRNA(Gln) in organisms which lack glutaminyl-tRNA synthetase. The reaction takes place in the presence of glutamine and ATP through an activated gamma-phospho-Glu-tRNA(Gln). This chain is Glutamyl-tRNA(Gln) amidotransferase subunit A, found in Cereibacter sphaeroides (strain KD131 / KCTC 12085) (Rhodobacter sphaeroides).